The chain runs to 315 residues: Olfactory receptor 2V2 (315 aa).

Over 1–26 the chain is Extracellular; the sequence is METWVNQSYTDGFFLLGIFSHSTADL. The N-linked (GlcNAc...) asparagine glycan is linked to asparagine 6. Residues 27-50 traverse the membrane as a helical segment; sequence VLFSVVMAVFTVALCGNVLLIFLI. The Cytoplasmic segment spans residues 51–58; that stretch reads YMDPHLHT. The chain crosses the membrane as a helical span at residues 59-80; sequence PMYFFLSQLSLMDLMLVCTNVP. Residues 81–101 lie on the Extracellular side of the membrane; it reads KMAANFLSGRKSISFVGCGIQ. The cysteines at positions 98 and 190 are disulfide-linked. Residues 102–121 form a helical membrane-spanning segment; it reads IGLFVCLVGSEGLLLGLMAY. Topologically, residues 122–140 are cytoplasmic; that stretch reads DRYVAISHPLHYPILMNQR. Residues 141–159 traverse the membrane as a helical segment; the sequence is VCLQITGSSWAFGIIDGLI. Over 160 to 196 the chain is Extracellular; sequence QMVVVMNFPYCGLRKVNHFFCEMLSLLKLACVDTSLF. Residues 197-220 form a helical membrane-spanning segment; that stretch reads EKVIFACCVFMLLFPFSIIVASYA. Over 221 to 237 the chain is Cytoplasmic; it reads HILGTVLQMHSAQAWKK. The chain crosses the membrane as a helical span at residues 238-260; it reads ALATCSSHLTAVTLFYGAAMFIY. Over 261–273 the chain is Extracellular; that stretch reads LRPRHYRAPSHDK. The helical transmembrane segment at 274 to 293 threads the bilayer; it reads VASIFYTVLTPMLNPLIYSL. The Cytoplasmic segment spans residues 294–315; it reads RNREVMGALRKGLDRCRIGSQH.

This sequence belongs to the G-protein coupled receptor 1 family.

The protein resides in the cell membrane. In terms of biological role, odorant receptor. This is Olfactory receptor 2V2 (OR2V2) from Homo sapiens (Human).